A 177-amino-acid polypeptide reads, in one-letter code: Prorelaxin (177 aa).

An N-terminal signal peptide occupies residues 1–22 (MSCKFVLQLLGFWLLLSQPCRA). Disulfide bonds link Cys36/Cys164, Cys48/Cys177, and Cys163/Cys168. Positions 64–149 (MTEEAVSSFI…LKSLYLDTLS (86 aa)) are cleaved as a propeptide — connecting peptide. The segment at 80 to 114 (FDTMPNLSEKPKTALPEGHPSLPEQQQYVPVSSDS) is disordered. Positions 102–114 (PEQQQYVPVSSDS) are enriched in polar residues.

Belongs to the insulin family. Heterodimer of a B chain and an A chain linked by two disulfide bonds.

The protein localises to the secreted. Relaxin is an ovarian hormone that acts with estrogen to produce dilatation of the birth canal in many mammals. It bears mature young, and allows separation of the pelvic bones. This chain is Prorelaxin (RLN), found in Mesocricetus auratus (Golden hamster).